A 163-amino-acid polypeptide reads, in one-letter code: Nucleotide-binding protein ROP_16630 (163 aa).

Belongs to the YajQ family.

In terms of biological role, nucleotide-binding protein. In Rhodococcus opacus (strain B4), this protein is Nucleotide-binding protein ROP_16630.